A 263-amino-acid chain; its full sequence is Meiotic drive suppressor wtf6 (263 aa).

The interval 1–68 is disordered; that stretch reads MKNNYTSLKS…REKNPSRSTD (68 aa). The segment covering 19-30 has biased composition (basic and acidic residues); sequence KTDHEIDLEKGP. 3 helical membrane-spanning segments follow: residues 73–93, 110–130, and 201–221; these read FLIKLLISFTSIILFNAPAVC, WTLFGFWCLVCTLALISLTYF, and SASAFTFMAVSSILIFIAETV.

Belongs to the WTF family. Homomer. Interacts with other proteins that exhibit high sequence similarity.

The protein resides in the spore membrane. It is found in the vacuole membrane. Functionally, acts as a suppressor component of the dual wtf meiotic drive system, and can suppress but not confer meiotic drive by compatible poisons. Wtf meiotic drive systems promote unequal transmission of alleles from the parental zygote to progeny spores by encoding a poison and an antidote from the same locus; the poison is trans-acting and forms toxic aggregates in all spores within an ascus, wherease the antidote is spore-specific and targets aggregates for degradation by the vacuole. Meiotic drive by wtf systems therefore lead to poisoning of all progeny that do not inherit the dual poison/antidote allele, or express a compatible antidote. This Schizosaccharomyces kambucha (Fission yeast) protein is Meiotic drive suppressor wtf6.